The chain runs to 433 residues: Bifunctional protein GlmU (433 aa).

Residues 1–226 form a pyrophosphorylase region; that stretch reads MLSVIILAAG…EECFLGVNSQ (226 aa). UDP-N-acetyl-alpha-D-glucosamine is bound by residues 7 to 10, K21, and 80 to 81; these read LAAG and GT. D106 contributes to the Mg(2+) binding site. UDP-N-acetyl-alpha-D-glucosamine-binding residues include G138, E152, N167, and N224. Residue N224 coordinates Mg(2+). Positions 227–247 are linker; that stretch reads TERAKAEEIMLERLRKNAMDL. An N-acetyltransferase region spans residues 248-433; that stretch reads GVVMQLPSSI…NGYFKFFKKP (186 aa). UDP-N-acetyl-alpha-D-glucosamine contacts are provided by R311 and K328. The Proton acceptor role is filled by H339. 2 residues coordinate UDP-N-acetyl-alpha-D-glucosamine: Y342 and N353. Acetyl-CoA contacts are provided by residues A356, 362–363, S381, S399, and R416; that span reads NY.

This sequence in the N-terminal section; belongs to the N-acetylglucosamine-1-phosphate uridyltransferase family. In the C-terminal section; belongs to the transferase hexapeptide repeat family. Homotrimer. Mg(2+) is required as a cofactor.

It localises to the cytoplasm. It catalyses the reaction alpha-D-glucosamine 1-phosphate + acetyl-CoA = N-acetyl-alpha-D-glucosamine 1-phosphate + CoA + H(+). The enzyme catalyses N-acetyl-alpha-D-glucosamine 1-phosphate + UTP + H(+) = UDP-N-acetyl-alpha-D-glucosamine + diphosphate. The protein operates within nucleotide-sugar biosynthesis; UDP-N-acetyl-alpha-D-glucosamine biosynthesis; N-acetyl-alpha-D-glucosamine 1-phosphate from alpha-D-glucosamine 6-phosphate (route II): step 2/2. It participates in nucleotide-sugar biosynthesis; UDP-N-acetyl-alpha-D-glucosamine biosynthesis; UDP-N-acetyl-alpha-D-glucosamine from N-acetyl-alpha-D-glucosamine 1-phosphate: step 1/1. Its pathway is bacterial outer membrane biogenesis; LPS lipid A biosynthesis. In terms of biological role, catalyzes the last two sequential reactions in the de novo biosynthetic pathway for UDP-N-acetylglucosamine (UDP-GlcNAc). The C-terminal domain catalyzes the transfer of acetyl group from acetyl coenzyme A to glucosamine-1-phosphate (GlcN-1-P) to produce N-acetylglucosamine-1-phosphate (GlcNAc-1-P), which is converted into UDP-GlcNAc by the transfer of uridine 5-monophosphate (from uridine 5-triphosphate), a reaction catalyzed by the N-terminal domain. The polypeptide is Bifunctional protein GlmU (Helicobacter pylori (strain HPAG1)).